We begin with the raw amino-acid sequence, 91 residues long: uncharacterized protein (91 aa).

The next 3 membrane-spanning stretches (helical) occupy residues 9–29, 44–64, and 71–91; these read VLWG…PFLP, LTVN…VFAW, and QFVF…CLAL.

The protein localises to the cell membrane. This is an uncharacterized protein from Bacillus subtilis (strain 168).